A 406-amino-acid chain; its full sequence is Phosphorylase b kinase gamma catalytic chain, liver/testis isoform (406 aa).

The Protein kinase domain maps to 24–291 (YDPKDVIGRG…AEQALQHPFF (268 aa)). Residues 30-38 (IGRGVSSVV) and lysine 53 contribute to the ATP site. The active-site Proton acceptor is aspartate 153. The tract at residues 306–330 (QRFRVAVWTVLAAGRVALSTHRVRP) is calmodulin-binding (domain-N). Serine 345 bears the Phosphoserine mark. Residues 346–370 (VRHLIDNCAFRLYGHWVKKGEQQNR) are calmodulin-binding (domain-C).

Belongs to the protein kinase superfamily. CAMK Ser/Thr protein kinase family. In terms of assembly, hexadecamer of 4 heterotetramers, each composed of alpha, beta, gamma, and delta subunits. Alpha (PHKA1 or PHKA2) and beta (PHKB) are regulatory subunits, gamma (PHKG1 or PHKG2) is the catalytic subunit, and delta is calmodulin.

It catalyses the reaction 2 ATP + phosphorylase b = 2 ADP + phosphorylase a.. Functionally, catalytic subunit of the phosphorylase b kinase (PHK), which mediates the neural and hormonal regulation of glycogen breakdown (glycogenolysis) by phosphorylating and thereby activating glycogen phosphorylase. May regulate glycogeneolysis in the testis. In vitro, phosphorylates PYGM. The chain is Phosphorylase b kinase gamma catalytic chain, liver/testis isoform (PHKG2) from Homo sapiens (Human).